We begin with the raw amino-acid sequence, 943 residues long: Glutamate receptor ionotropic, NMDA 1 (943 aa).

The first 20 residues, 1-20, serve as a signal peptide directing secretion; that stretch reads MSTMRLLTLALLFSCSFARA. Topologically, residues 21–580 are extracellular; the sequence is ACDPKIVNIG…TLDSFMQPFQ (560 aa). N-linked (GlcNAc...) asparagine glycans are attached at residues Asn-61, Asn-224, Asn-260, Asn-297, Asn-321, Asn-371, Asn-389, Asn-461, Asn-492, and Asn-512. A disulfide bridge links Cys-79 with Cys-329. 2 disulfides stabilise this stretch: Cys-441-Cys-475 and Cys-457-Cys-476. Glycine is bound by residues Pro-537, Thr-539, and Arg-544. A helical membrane pass occupies residues 581–601; the sequence is STLWLLVGLSVHVVAVMLYLL. Topologically, residues 602-623 are cytoplasmic; sequence DRFSPFGRFKVNSEEEEEDALT. An intramembrane region (discontinuously helical) is located at residues 624 to 645; it reads LSSAMWFSWGVLLNSGIGEGAP. The pore-forming stretch occupies residues 624-645; that stretch reads LSSAMWFSWGVLLNSGIGEGAP. The Cytoplasmic segment spans residues 646-651; sequence RSFSAR. The chain crosses the membrane as a helical span at residues 652–668; it reads ILGMVWAGFAMIIVASY. Residues 669-833 lie on the Extracellular side of the membrane; it reads TANLAAFLVL…NAPATLTFEN (165 aa). N-linked (GlcNAc...) asparagine glycosylation occurs at Asn-695. 2 residues coordinate glycine: Ser-709 and Asp-753. Cys-765 and Cys-819 are disulfide-bonded. Asn-792 carries N-linked (GlcNAc...) asparagine glycosylation. A helical transmembrane segment spans residues 834 to 854; it reads MAGVFMLVAGGIVAGIFLIFI. Residues 855–943 lie on the Cytoplasmic side of the membrane; the sequence is EIAYKRHKDA…LSDPSVSTVV (89 aa). A phosphoserine mark is found at Ser-910, Ser-911, Ser-917, and Ser-918.

The protein belongs to the glutamate-gated ion channel (TC 1.A.10.1) family. NR1/GRIN1 subfamily. Heterotetramer; the NMDAR subunits are modular and harbor tiered domains that function in concert to regulate opening and closing of the cation-selective ion channel pore. Forms heterotetrameric channels composed of two GluN1/zeta subunits (GRIN1), and two identical GluN2/epsilon subunits (GRIN2A, GRIN2B, GRIN2C or GRIN2D) or GluN3 subunits (GRIN3A or GRIN3B) (in vitro). Can also form heterotetrameric channels that contain at least two GluN1 subunits and at least two different GluN2 subunits (or a combination of one GluN2 and one GluN3 subunits) (in vitro). In vivo, the subunit composition may vary in function of the expression levels of the different subunits. Found in a complex with GRIN2A or GRIN2B, GRIN3A and PPP2CB. Found in a complex with GRIN2A or GRIN2B and GRIN3B. Interacts with SNX27 (via PDZ domain); the interaction is required for recycling to the plasma membrane when endocytosed and prevent degradation in lysosomes. Interacts with DLG4 and MPDZ. Interacts with LRFN1 and LRFN2. Interacts with MYZAP. Found in a complex with DLG4 and PRR7. Found in a complex with GRIN2B and PRR7. Interacts with PRR7; the interaction is reduced following NMDA receptor activity. Post-translationally, NMDA is probably regulated by C-terminal phosphorylation of an isoform of GRIN1 by PKC. Dephosphorylated on Ser-897 probably by protein phosphatase 2A (PPP2CB). Its phosphorylated state is influenced by the formation of the NMDAR-PPP2CB complex and the NMDAR channel activity.

It is found in the cell membrane. The protein localises to the postsynaptic cell membrane. It localises to the postsynaptic density membrane. The protein resides in the synaptic cell membrane. The catalysed reaction is Ca(2+)(in) = Ca(2+)(out). The enzyme catalyses Na(+)(in) = Na(+)(out). It catalyses the reaction K(+)(in) = K(+)(out). Functionally, component of N-methyl-D-aspartate (NMDA) receptors (NMDARs) that function as heterotetrameric, ligand-gated cation channels with high calcium permeability and voltage-dependent block by Mg(2+). NMDARs participate in synaptic plasticity for learning and memory formation by contributing to the long-term potentiation (LTP). Channel activation requires binding of the neurotransmitter L-glutamate to the GluN2 subunit, glycine or D-serine binding to the GluN1 subunit, plus membrane depolarization to eliminate channel inhibition by Mg(2+). NMDARs mediate simultaneously the potasium efflux and the influx of calcium and sodium. Each GluN2 or GluN3 subunit confers differential attributes to channel properties, including activation, deactivation and desensitization kinetics, pH sensitivity, Ca2(+) permeability, and binding to allosteric modulators. The GluN3 subunits confer distinctive ion channel activation mechanism, which relies exclusively on glycine and does not involve glutamate. The protein is Glutamate receptor ionotropic, NMDA 1 of Canis lupus familiaris (Dog).